Reading from the N-terminus, the 243-residue chain is Probable transcriptional regulatory protein Smal_3128 (243 aa).

It belongs to the TACO1 family.

Its subcellular location is the cytoplasm. The sequence is that of Probable transcriptional regulatory protein Smal_3128 from Stenotrophomonas maltophilia (strain R551-3).